We begin with the raw amino-acid sequence, 348 residues long: Succinylglutamate desuccinylase (348 aa).

Zn(2+)-binding residues include H64, E67, and H164. E228 is a catalytic residue.

This sequence belongs to the AspA/AstE family. Succinylglutamate desuccinylase subfamily. The cofactor is Zn(2+).

The catalysed reaction is N-succinyl-L-glutamate + H2O = L-glutamate + succinate. The protein operates within amino-acid degradation; L-arginine degradation via AST pathway; L-glutamate and succinate from L-arginine: step 5/5. Its function is as follows. Transforms N(2)-succinylglutamate into succinate and glutamate. The sequence is that of Succinylglutamate desuccinylase from Shewanella amazonensis (strain ATCC BAA-1098 / SB2B).